Here is a 297-residue protein sequence, read N- to C-terminus: Methionyl-tRNA formyltransferase (297 aa).

The segment at Q31–E52 is disordered. S108–P111 serves as a coordination point for (6S)-5,6,7,8-tetrahydrofolate.

Belongs to the Fmt family.

It carries out the reaction L-methionyl-tRNA(fMet) + (6R)-10-formyltetrahydrofolate = N-formyl-L-methionyl-tRNA(fMet) + (6S)-5,6,7,8-tetrahydrofolate + H(+). In terms of biological role, attaches a formyl group to the free amino group of methionyl-tRNA(fMet). The formyl group appears to play a dual role in the initiator identity of N-formylmethionyl-tRNA by promoting its recognition by IF2 and preventing the misappropriation of this tRNA by the elongation apparatus. The protein is Methionyl-tRNA formyltransferase of Paracoccus denitrificans (strain Pd 1222).